Reading from the N-terminus, the 156-residue chain is Ribosomal RNA large subunit methyltransferase H (156 aa).

S-adenosyl-L-methionine contacts are provided by residues Leu73, Gly104, and 123 to 128 (LSDLTL).

The protein belongs to the RNA methyltransferase RlmH family. Homodimer.

The protein localises to the cytoplasm. It carries out the reaction pseudouridine(1915) in 23S rRNA + S-adenosyl-L-methionine = N(3)-methylpseudouridine(1915) in 23S rRNA + S-adenosyl-L-homocysteine + H(+). Specifically methylates the pseudouridine at position 1915 (m3Psi1915) in 23S rRNA. This is Ribosomal RNA large subunit methyltransferase H from Methylibium petroleiphilum (strain ATCC BAA-1232 / LMG 22953 / PM1).